Consider the following 209-residue polypeptide: Ribosomal RNA large subunit methyltransferase E (209 aa).

S-adenosyl-L-methionine contacts are provided by Gly-63, Trp-65, Asp-83, Asp-99, and Asp-124. Lys-164 functions as the Proton acceptor in the catalytic mechanism.

This sequence belongs to the class I-like SAM-binding methyltransferase superfamily. RNA methyltransferase RlmE family.

It is found in the cytoplasm. It catalyses the reaction uridine(2552) in 23S rRNA + S-adenosyl-L-methionine = 2'-O-methyluridine(2552) in 23S rRNA + S-adenosyl-L-homocysteine + H(+). Functionally, specifically methylates the uridine in position 2552 of 23S rRNA at the 2'-O position of the ribose in the fully assembled 50S ribosomal subunit. The protein is Ribosomal RNA large subunit methyltransferase E of Yersinia enterocolitica serotype O:8 / biotype 1B (strain NCTC 13174 / 8081).